Reading from the N-terminus, the 393-residue chain is MSCPVGNHNGDPQGGQRLGSEAGMLYGEYLMLDKVLSAQRMLSVESNKPVHDEHLFIVTHQAYELWFKQIIFELDSIRSLFSTEHMEESRTLEILKRLNRIVMILKLLVDQVPILETMTPLDFMDFRDFLSPASGFQSLQFRLLENKLGVKTEHRVKYNQKYSEVFASDPCAIERLSITESEPSLADLVQKWLERTPGLETNGFNFWGKFEESVEQLLADQEASAMEEEHENVKNYRLMDIEKRREVYKSIFDASVHDALVARGDRRFTHRALQGAIMITFYRDEPRFSQPHQLLMLLMDIDSLITKWRYNHVIMVQRMIGSQQLGTGGSSGYQYLRSTLSDRYKVFIDLFNLSTFLIPRGSIPPLTCEMQKALNLAWGSPVHQAKQINYAAK.

Residues 56-60 (FIVTH) and arginine 127 contribute to the substrate site. Histidine 312 provides a ligand contact to heme. Threonine 327 provides a ligand contact to substrate.

The protein belongs to the tryptophan 2,3-dioxygenase family. Homotetramer. Dimer of dimers. The cofactor is heme.

It catalyses the reaction L-tryptophan + O2 = N-formyl-L-kynurenine. It functions in the pathway amino-acid degradation; L-tryptophan degradation via kynurenine pathway; L-kynurenine from L-tryptophan: step 1/2. It participates in pigment biosynthesis; ommochrome biosynthesis. Stimulated by low concentrations of hydrogen peroxide (5 uM), ascorbate (0.1-0.3 mM), and sodium hydrosulfite (0.1 mM). Inhibited by high concentrations of hydrogen peroxide (0.1 mM), ascorbate (10 mM), and sodium hydrosulfite (1 mM). Its function is as follows. Heme-dependent dioxygenase that catalyzes the oxidative cleavage of the L-tryptophan (L-Trp) pyrrole ring and converts L-tryptophan to N-formyl-L-kynurenine. Catalyzes the oxidative cleavage of the indole moiety. This Aedes aegypti (Yellowfever mosquito) protein is Tryptophan 2,3-dioxygenase.